Reading from the N-terminus, the 1164-residue chain is Nuclear exosome regulator NRDE2 (1164 aa).

Disordered stretches follow at residues 1-25 (MALF…ELDW) and 39-149 (LSQQ…GHRF). Ala-2 bears the N-acetylalanine mark. The span at 61–73 (LKSESSDESDTNK) shows a compositional bias: basic and acidic residues. A coiled-coil region spans residues 61-383 (LKSESSDESD…IESNQSSVDL (323 aa)). Basic residues predominate over residues 74-103 (KLKQTSRKKKKEKKKKRKHQHHKKTKRKHG). The segment covering 110–133 (SETDTDSEKDKPSRGVGGSKKESE) has biased composition (basic and acidic residues). The interval 163–266 (FRTDKKPDPA…KDLEDAAPVT (104 aa)) is MID/MTR4-interacting domain. The segment at 279–305 (TTHWLQGQGPPEQESKQPDAQPDSESA) is disordered. 5 HAT repeats span residues 305-337 (AALK…FQDE), 395-427 (WEPS…FCQS), 758-792 (SQGK…LEWL), 978-1010 (YPLA…IQNK), and 1067-1101 (GLMH…FLVS).

The protein belongs to the NRDE2 family. Interacts with MTREX; the interaction is direct and stabilizes NRDE2. Interacts with EXOSC10, EFTUD2 and EIF4A3.

Its subcellular location is the nucleus speckle. The protein localises to the nucleus. It localises to the nucleolus. The protein resides in the nucleoplasm. Functionally, protein of the nuclear speckles that regulates RNA degradation and export from the nucleus through its interaction with MTREX an essential factor directing various RNAs to exosomal degradation. Changes the conformation of MTREX, precluding its association with the nuclear exosome and interaction with proteins required for its function in RNA exosomal degradation. Negatively regulates, for instance, the degradation of mRNAs and lncRNAs by inhibiting their MTREX-mediated recruitment to nuclear exosome. By preventing the degradation of RNAs in the nucleus, it promotes their export to the cytoplasm. U5 snRNP-associated RNA splicing factor which is required for efficient splicing of CEP131 pre-mRNA and plays an important role in centrosome maturation, integrity and function during mitosis. Suppresses intron retention in a subset of pre-mRNAs containing short, GC-rich introns with relatively weak 5' and 3' splice sites. Plays a role in DNA damage response. The chain is Nuclear exosome regulator NRDE2 from Homo sapiens (Human).